The primary structure comprises 375 residues: MSLMVISMACVGFFLLQGAWTHEGGQDKPLLSAWPSAVVPRGGHVTLLCRSRLGFTIFSLYKEDGVPVPELYNKIFWKSILMGPVTPAHAGTYRCRGSHPRSPIEWSAPSNPLVIVVTGLFGKPSLSAQPGPTVRTGENVTLSCSSRSSFDMYHLSREGRAHEPRLPAVPSVNGTFQADFPLGPATHGGTYTCFGSLHDSPYEWSDPSDPLLVSVTGNSSSSSSSPTEPSSKTGIRRHLHILIGTSVAIILFIILFFFLLHCCCSNKKNAAVMDQEPAGDRTVNREDSDDQDPQEVTYAQLDHCVFTQTKITSPSQRPKTPPTDTTMYMELPNAKPRSLSPAHKHHSQALRGSSRETTALSQNRVASSHVPAAGI.

An N-terminal signal peptide occupies residues 1–21 (MSLMVISMACVGFFLLQGAWT). Over 22–238 (HEGGQDKPLL…PSSKTGIRRH (217 aa)) the chain is Extracellular. Ig-like C2-type domains are found at residues 42–102 (GGHV…HPRS) and 137–200 (GENV…LHDS). Cys49 and Cys95 are joined by a disulfide. N-linked (GlcNAc...) asparagine glycans are attached at residues Asn139, Asn173, and Asn218. Cys144 and Cys193 form a disulfide bridge. The interval 213 to 233 (VSVTGNSSSSSSSPTEPSSKT) is disordered. Over residues 219–231 (SSSSSSSPTEPSS) the composition is skewed to low complexity. A helical transmembrane segment spans residues 239–259 (LHILIGTSVAIILFIILFFFL). Over 260–375 (LHCCCSNKKN…ASSHVPAAGI (116 aa)) the chain is Cytoplasmic. A disordered region spans residues 334–375 (AKPRSLSPAHKHHSQALRGSSRETTALSQNRVASSHVPAAGI). Over residues 355 to 366 (RETTALSQNRVA) the composition is skewed to polar residues.

It belongs to the immunoglobulin superfamily.

The protein resides in the cell membrane. Its function is as follows. Receptor on natural killer (NK) cells for HLA-C alleles. Inhibits the activity of NK cells thus preventing cell lysis. The polypeptide is Killer cell immunoglobulin-like receptor 2DL5A (KIR2DL5A) (Homo sapiens (Human)).